We begin with the raw amino-acid sequence, 361 residues long: MSKSALDPVEFLKGALEIPSPSGKERAVAEYLAEGMQKLGLKGFVDEADNARGQVGEGPVQVVLLGHIDTVPGQIPVRLEGGRLFGRGAVDAKGPFVAMIFAAAGLSEEARRRLTVHLVGATEEEAPSSKGARFVAPRLKPHYAVIGEPSGWEGITLGYKGRLLVKARREKDHFHSAHHEPNAAEELISYFVAIKAWAEAMNVGQRPFDQVQYTLRDFRVHPAELRQVAEMFFDLRLPPRLPPEEAIRHLTAYAPPTIELEFFGREVPYQGPKDTPLTRAFRQAIRKAGGRPVFKLKTGTSDMNVLAPHWPVPMVAYGPGDSTLDHTPYEHVEVAEFLKGIEVLRGALEALAQTHAGEKEG.

Histidine 67 contacts Zn(2+). The active site involves aspartate 69. Aspartate 91 contacts Zn(2+). Glutamate 124 functions as the Proton acceptor in the catalytic mechanism. Zn(2+)-binding residues include glutamate 125, glutamate 148, and histidine 326.

It belongs to the peptidase M20A family. LysK subfamily. Zn(2+) serves as cofactor. Co(2+) is required as a cofactor.

It is found in the cytoplasm. The enzyme catalyses [amino-group carrier protein]-C-terminal-gamma-(L-lysyl)-L-glutamate + H2O = [amino-group carrier protein]-C-terminal-L-glutamate + L-lysine. It participates in amino-acid biosynthesis; L-lysine biosynthesis via AAA pathway; L-lysine from L-alpha-aminoadipate (Thermus route): step 5/5. Functionally, catalyzes the release of L-lysine from [LysW]-gamma-L-lysine. The sequence is that of [LysW]-lysine hydrolase from Thermus thermophilus (strain ATCC 27634 / DSM 579 / HB8).